A 320-amino-acid chain; its full sequence is MRSAQVYRWQIPMDAGVVLRDRRLKTRDGLYVCLRDGEREGWGEISPLPGFSQETWEEAQTALLTWVNDWLQGNEGLPEMPSVAFGASCALAELTGVLPEAADYRAAPLCTGDPDDLVLRLADMPGEKIAKVKVGLYEAVRDGMVVNLLLEAIPDLHLRLDANRAWTPLKAQQFAKYVNPDYRARIAFLEEPCKTRDDSRAFARETGIAIAWDESLREADFTFEAEEGVRAVVIKPTLTGSLDKVREQVAAAHALGLTAVISSSIESSLGLTQLARIAAWLTPGTLPGLDTLHLMQAQQVRPWPGSALPCLKRDELERLL.

The active-site Proton donor is the lysine 133. Positions 161, 190, and 213 each coordinate Mg(2+). The active-site Proton acceptor is the lysine 235.

The protein belongs to the mandelate racemase/muconate lactonizing enzyme family. MenC type 1 subfamily. A divalent metal cation serves as cofactor.

It catalyses the reaction (1R,6R)-6-hydroxy-2-succinyl-cyclohexa-2,4-diene-1-carboxylate = 2-succinylbenzoate + H2O. It functions in the pathway quinol/quinone metabolism; 1,4-dihydroxy-2-naphthoate biosynthesis; 1,4-dihydroxy-2-naphthoate from chorismate: step 4/7. Its pathway is quinol/quinone metabolism; menaquinone biosynthesis. Converts 2-succinyl-6-hydroxy-2,4-cyclohexadiene-1-carboxylate (SHCHC) to 2-succinylbenzoate (OSB). This chain is o-succinylbenzoate synthase, found in Salmonella agona (strain SL483).